The following is a 325-amino-acid chain: Glutarate 2-hydroxylase (325 aa).

Fe cation is bound by residues His-160, Asp-162, and His-292.

It belongs to the glutarate hydroxylase family. In terms of assembly, homotetramer. Fe(2+) is required as a cofactor.

The enzyme catalyses glutarate + 2-oxoglutarate + O2 = (S)-2-hydroxyglutarate + succinate + CO2. It participates in amino-acid degradation. Acts as an alpha-ketoglutarate-dependent dioxygenase catalyzing hydroxylation of glutarate (GA) to L-2-hydroxyglutarate (L2HG). Functions in a L-lysine degradation pathway that proceeds via cadaverine, glutarate and L-2-hydroxyglutarate. This chain is Glutarate 2-hydroxylase, found in Shigella boydii serotype 18 (strain CDC 3083-94 / BS512).